The chain runs to 423 residues: Protein CLP1 homolog (423 aa).

ATP-binding positions include glutamate 19, lysine 60, and 122–127; that span reads DVGKTT.

Belongs to the Clp1 family. Clp1 subfamily.

The protein resides in the nucleus. Functionally, required for endonucleolytic cleavage during polyadenylation-dependent pre-mRNA 3'-end formation. The sequence is that of Protein CLP1 homolog (cbc) from Anopheles gambiae (African malaria mosquito).